A 473-amino-acid chain; its full sequence is Glutamyl-tRNA reductase (473 aa).

Substrate-binding positions include 49 to 52 (TCNR), Ser-109, 114 to 116 (EQQ), and Gln-120. Cys-50 functions as the Nucleophile in the catalytic mechanism. Residue 189-194 (GAGSMG) participates in NADP(+) binding. Residues 445–473 (SGLDAGSGPQGADGPSAGPTPSAPNPSAE) form a disordered region.

This sequence belongs to the glutamyl-tRNA reductase family. As to quaternary structure, homodimer.

It carries out the reaction (S)-4-amino-5-oxopentanoate + tRNA(Glu) + NADP(+) = L-glutamyl-tRNA(Glu) + NADPH + H(+). It functions in the pathway porphyrin-containing compound metabolism; protoporphyrin-IX biosynthesis; 5-aminolevulinate from L-glutamyl-tRNA(Glu): step 1/2. Catalyzes the NADPH-dependent reduction of glutamyl-tRNA(Glu) to glutamate 1-semialdehyde (GSA). The chain is Glutamyl-tRNA reductase from Mycobacterium ulcerans (strain Agy99).